A 939-amino-acid chain; its full sequence is Valine--tRNA ligase (939 aa).

The short motif at 47–57 (PNVTGILHMGH) is the 'HIGH' region element. A 'KMSKS' region motif is present at residues 563–567 (KLSKS). Residue K566 participates in ATP binding. Positions 874-939 (EHLAKERVRL…QSILDKLASL (66 aa)) form a coiled coil.

This sequence belongs to the class-I aminoacyl-tRNA synthetase family. ValS type 1 subfamily. In terms of assembly, monomer.

The protein localises to the cytoplasm. The enzyme catalyses tRNA(Val) + L-valine + ATP = L-valyl-tRNA(Val) + AMP + diphosphate. Functionally, catalyzes the attachment of valine to tRNA(Val). As ValRS can inadvertently accommodate and process structurally similar amino acids such as threonine, to avoid such errors, it has a 'posttransfer' editing activity that hydrolyzes mischarged Thr-tRNA(Val) in a tRNA-dependent manner. The chain is Valine--tRNA ligase from Chlamydia trachomatis serovar L2b (strain UCH-1/proctitis).